The chain runs to 122 residues: Large ribosomal subunit protein uL14 (122 aa).

Belongs to the universal ribosomal protein uL14 family. Part of the 50S ribosomal subunit. Forms a cluster with proteins L3 and L19. In the 70S ribosome, L14 and L19 interact and together make contacts with the 16S rRNA in bridges B5 and B8.

In terms of biological role, binds to 23S rRNA. Forms part of two intersubunit bridges in the 70S ribosome. The protein is Large ribosomal subunit protein uL14 of Stutzerimonas stutzeri (strain A1501) (Pseudomonas stutzeri).